We begin with the raw amino-acid sequence, 147 residues long: Leghemoglobin-1 (147 aa).

The Globin domain occupies Ser2–Ser147. A nitrated tyrosine mark is found at Tyr25 and Tyr30. A heme b-binding site is contributed by Ser45. Position 45 is a phosphoserine (Ser45). His62 is a binding site for O2. Heme b contacts are provided by Lys65, His94, and Lys97. Tyr135 carries the post-translational modification Nitrated tyrosine.

The protein belongs to the plant globin family. In terms of assembly, monomer. In terms of processing, nitrated in effective nodules and particularly in hypoxic conditions; this mechanism may play a protective role in the symbiosis by buffering toxic peroxynitrite NO(2)(-). Nitration level decrease during nodule senescence. Phosphorylation at Ser-45 disrupts the molecular environment of its porphyrin ring oxygen binding pocket, thus leading to a reduced oxygen consumption and to the delivery of oxygen O(2) to symbiosomes. As to expression, root nodules.

The protein resides in the cytoplasm. It is found in the cytosol. Its subcellular location is the nucleus. Leghemoglobin that reversibly binds oxygen O(2) through a pentacoordinated heme iron. In root nodules, facilitates the diffusion of oxygen to the bacteroids while preventing the bacterial nitrogenase from being inactivated by buffering dioxygen, nitric oxide and carbon monoxide, and promoting the formation of reactive oxygen species (ROS, e.g. H(2)O(2)). This role is essential for symbiotic nitrogen fixation (SNF). The polypeptide is Leghemoglobin-1 (Medicago sativa (Alfalfa)).